Here is a 306-residue protein sequence, read N- to C-terminus: Solute carrier family 25 member 48 (306 aa).

Solcar repeat units follow at residues 3 to 86, 101 to 200, and 209 to 296; these read SFQL…TQRF, RSLS…LSEW, and PSPY…SLKA. 6 helical membrane passes run 9 to 29, 61 to 81, 107 to 127, 184 to 204, 212 to 232, and 272 to 290; these read FVAG…LDTV, GMSF…GVFS, LLAS…VELI, IPGY…ITPE, YAAW…ATPM, and ITVN…FLGY.

The protein belongs to the mitochondrial carrier (TC 2.A.29) family.

It is found in the mitochondrion inner membrane. The chain is Solute carrier family 25 member 48 (Slc25a48) from Mus musculus (Mouse).